Here is a 468-residue protein sequence, read N- to C-terminus: UDP-N-acetylmuramate--L-alanine ligase (468 aa).

121–127 (GSHGKTT) contributes to the ATP binding site.

The protein belongs to the MurCDEF family.

The protein resides in the cytoplasm. It carries out the reaction UDP-N-acetyl-alpha-D-muramate + L-alanine + ATP = UDP-N-acetyl-alpha-D-muramoyl-L-alanine + ADP + phosphate + H(+). Its pathway is cell wall biogenesis; peptidoglycan biosynthesis. Its function is as follows. Cell wall formation. This is UDP-N-acetylmuramate--L-alanine ligase from Borreliella burgdorferi (strain ATCC 35210 / DSM 4680 / CIP 102532 / B31) (Borrelia burgdorferi).